Reading from the N-terminus, the 499-residue chain is Lysine--tRNA ligase (499 aa).

2 residues coordinate Mg(2+): Glu408 and Glu415.

Belongs to the class-II aminoacyl-tRNA synthetase family. Homodimer. Requires Mg(2+) as cofactor.

The protein resides in the cytoplasm. The enzyme catalyses tRNA(Lys) + L-lysine + ATP = L-lysyl-tRNA(Lys) + AMP + diphosphate. The protein is Lysine--tRNA ligase of Bacillus cereus (strain B4264).